A 61-amino-acid chain; its full sequence is Small ribosomal subunit protein uS14 (61 aa).

4 residues coordinate Zn(2+): Cys-24, Cys-27, Cys-40, and Cys-43.

The protein belongs to the universal ribosomal protein uS14 family. Zinc-binding uS14 subfamily. As to quaternary structure, part of the 30S ribosomal subunit. Contacts proteins S3 and S10. Zn(2+) serves as cofactor.

Binds 16S rRNA, required for the assembly of 30S particles and may also be responsible for determining the conformation of the 16S rRNA at the A site. The protein is Small ribosomal subunit protein uS14 of Anoxybacillus flavithermus (strain DSM 21510 / WK1).